A 1216-amino-acid chain; its full sequence is SPOC domain-containing protein 1 (1216 aa).

5 disordered regions span residues methionine 1–glycine 74, glutamate 166–serine 216, asparagine 236–serine 325, arginine 348–glutamate 462, and serine 511–lysine 601. Low complexity predominate over residues proline 36–glycine 50. Residues cysteine 177–proline 190 are compositionally biased toward basic and acidic residues. Basic residues predominate over residues arginine 204 to glycine 213. Over residues serine 266–cysteine 278 the composition is skewed to gly residues. Residues serine 314 to serine 325 show a composition bias toward low complexity. A compositionally biased stretch (basic and acidic residues) spans arginine 436–glutamate 452. The span at glutamate 581–glutamate 592 shows a compositional bias: acidic residues. The TFIIS central domain maps to valine 608–cysteine 728. Residues glutamine 823 to glycine 850 are disordered. Over residues proline 832 to aspartate 844 the composition is skewed to basic and acidic residues. The SPOC domain occupies tryptophan 867 to proline 970. Over residues arginine 1046–proline 1055 the composition is skewed to basic and acidic residues. Disordered stretches follow at residues arginine 1046 to histidine 1140 and proline 1176 to alanine 1216.

As to quaternary structure, interacts with DNMT3A, DNMT3C and DNMT3L. Interacts with C19orf84. Interacts with SPIN1; promoting recruitment to transposons marked with histone H3 trimethylated at both 'Lys-4' and 'Lys-9' (H3K4me3K9me3).

It localises to the nucleus. The protein resides in the chromosome. In terms of biological role, protein adapter that acts as an essential executor of PIWIL4-piRNA pathway directed transposon DNA methylation and silencing in the male embryonic germ cells. Recruited to young transposons, which are specifically marked with histone H3 trimethylated at both 'Lys-4' and 'Lys-9' (H3K4me3K9me3), via its association with SPIN1 chromatin reader, and associates with the de novo DNA methylation machinery and repressive chromatin remodeling complexes. Following this, PIWIL4 engages with nascent transposable element transcript to direct piRNA-directed DNA methylation. Not required for piRNA biosynthesis. This chain is SPOC domain-containing protein 1, found in Homo sapiens (Human).